The sequence spans 465 residues: E3 ubiquitin-protein ligase TRIM15 (465 aa).

Residues Cys-16–Gln-61 form an RING-type zinc finger. A B box-type zinc finger spans residues Leu-78–Leu-119. 4 residues coordinate Zn(2+): Cys-83, His-86, Cys-105, and His-111. Residues Tyr-126 to Gln-229 are a coiled coil. The B30.2/SPRY domain occupies Glu-276 to Gly-465.

It belongs to the TRIM/RBCC family. As to quaternary structure, interacts with paxillin/PXN; this interaction recruits TRIM15 to focal adhesions. Interacts with TRIM8; this interaction prevents TRIM8 cytoplasmic translocation.

It is found in the cytoplasm. It localises to the nucleus. The protein resides in the cell junction. The protein localises to the focal adhesion. The catalysed reaction is S-ubiquitinyl-[E2 ubiquitin-conjugating enzyme]-L-cysteine + [acceptor protein]-L-lysine = [E2 ubiquitin-conjugating enzyme]-L-cysteine + N(6)-ubiquitinyl-[acceptor protein]-L-lysine.. E3 ubiquitin ligase that plays a role in several processes including innate antiviral immnity, cell migration and chemotaxis. Acts as a 'Lys-63'-specific ubiquitin ligase for MAPK1/ERK2 and MAPK3/ERK1, promoting their activation by facilitating their interaction with MAP2K1 and MAP2K2. Also plays a role in cell migration and chemotaxis by acting as a stable focal adhesion component upon recruitment by multi-adapter protein paxillin/PXN. Functions in the RIGI-mediated interferon induction pathway upstream or at the level of MAVS. Inhibits NF-kappa-B activation by turnover of 'Lys-63'-linked ubiquitination of MAP3K7/TAK1. Mechanistically, prevents TRIM8 cytoplasmic translocation and thus inhibits TRIM8-mediated 'Lys-63'-linked polyubiquitination of MAP3K7/TAK1 in the cytoplasm. Also has an important regulatory effect on the activation of hepatic stellate cells (HSCs). The sequence is that of E3 ubiquitin-protein ligase TRIM15 (TRIM15) from Macaca mulatta (Rhesus macaque).